The following is an 89-amino-acid chain: Neurotoxin LmNaTx28 (89 aa).

An N-terminal signal peptide occupies residues 1 to 18 (MNLPTVLCIIALILGVRS). One can recognise an LCN-type CS-alpha/beta domain in the interval 20–85 (KNGFFTKLGK…VADSSEKACQ (66 aa)). 4 cysteine pairs are disulfide-bonded: C33–C57, C43–C62, C47–C64, and C58–C84.

The protein belongs to the long (4 C-C) scorpion toxin superfamily. Sodium channel inhibitor family. Beta subfamily. In terms of tissue distribution, expressed by the venom gland.

It localises to the secreted. In terms of biological role, binds voltage-independently at site-4 of sodium channels (Nav) and shift the voltage of activation toward more negative potentials thereby affecting sodium channel activation and promoting spontaneous and repetitive firing. In Lychas mucronatus (Chinese swimming scorpion), this protein is Neurotoxin LmNaTx28.